The chain runs to 252 residues: UPF0273 protein MK0039 (252 aa).

Positions 4 to 248 (ERVSTGIPGM…VFVKERGEVR (245 aa)) constitute a KaiC domain. 31–38 (GGPGTGKT) contributes to the ATP binding site.

This sequence belongs to the UPF0273 family.

This chain is UPF0273 protein MK0039, found in Methanopyrus kandleri (strain AV19 / DSM 6324 / JCM 9639 / NBRC 100938).